We begin with the raw amino-acid sequence, 223 residues long: HTH-type transcriptional dual regulator CecR (223 aa).

One can recognise an HTH tetR-type domain in the interval 11–70; that stretch reads EQAKKQLIAAALAQFGEYGMNATTREIAAQAGQNIAAITYYFGSKEDLYLACAQWIADFI. Residues 33-52 constitute a DNA-binding region (H-T-H motif); it reads TTREIAAQAGQNIAAITYYF.

Its subcellular location is the cytoplasm. In terms of biological role, regulates transcription of the cecR-ybhGFSR operon and the rhlE gene, which altogether are involved in the control of sensitivity to cefoperazone and chloramphenicol. Represses the cecR-ybhGFSR operon and activates the rhlE operon. Acts by binding to a palindromic sequence within the intergenic spacer located between these two divergently transcribed operons. The chain is HTH-type transcriptional dual regulator CecR from Shigella flexneri.